The sequence spans 985 residues: Probable oxidoreductase YjgC (985 aa).

The 2Fe-2S ferredoxin-type domain maps to 3 to 79; that stretch reads GKKTITINGV…GDVIDTLSPD (77 aa). Positions 37, 48, 51, and 63 each coordinate [2Fe-2S] cluster. Residues 79–119 form the 4Fe-4S His(Cys)3-ligated-type domain; that stretch reads DVKKAQVIGMDKILYNHELYCTVCDYNNGGCEIHNTVKEMK. Residues histidine 95, cysteine 99, cysteine 102, cysteine 109, cysteine 148, cysteine 151, cysteine 154, cysteine 158, cysteine 191, cysteine 194, cysteine 197, cysteine 201, cysteine 265, cysteine 268, cysteine 272, and cysteine 300 each coordinate [4Fe-4S] cluster. 4Fe-4S ferredoxin-type domains follow at residues 139 to 170 and 182 to 211; these read PFYRYDPDQCILCGRCVEACQDVQVTETLTID and NDVPINESSCVSCGHCSTVCPCNAMMEKGM. Residues 258-314 form the 4Fe-4S Mo/W bis-MGD-type domain; sequence IKKTKTVCTYCGVGCSFDVWTKGRDILKVEPQEEAPANGISTCVKGKFGWDFVNSEE.

It in the C-terminal section; belongs to the prokaryotic molybdopterin-containing oxidoreductase family. The cofactor is [2Fe-2S] cluster. [4Fe-4S] cluster serves as cofactor. Requires Mo-bis(molybdopterin guanine dinucleotide) as cofactor.

The chain is Probable oxidoreductase YjgC (yjgC) from Bacillus subtilis (strain 168).